A 92-amino-acid polypeptide reads, in one-letter code: Small ribosomal subunit protein uS19c (92 aa).

This sequence belongs to the universal ribosomal protein uS19 family.

The protein localises to the plastid. Its subcellular location is the chloroplast. Protein S19 forms a complex with S13 that binds strongly to the 16S ribosomal RNA. This chain is Small ribosomal subunit protein uS19c (rps19), found in Chlorella vulgaris (Green alga).